Reading from the N-terminus, the 296-residue chain is Bifunctional protein FolD 1/3 (296 aa).

Residues G166–S168, S191, and I232 contribute to the NADP(+) site.

It belongs to the tetrahydrofolate dehydrogenase/cyclohydrolase family. In terms of assembly, homodimer.

It carries out the reaction (6R)-5,10-methylene-5,6,7,8-tetrahydrofolate + NADP(+) = (6R)-5,10-methenyltetrahydrofolate + NADPH. It catalyses the reaction (6R)-5,10-methenyltetrahydrofolate + H2O = (6R)-10-formyltetrahydrofolate + H(+). It participates in one-carbon metabolism; tetrahydrofolate interconversion. In terms of biological role, catalyzes the oxidation of 5,10-methylenetetrahydrofolate to 5,10-methenyltetrahydrofolate and then the hydrolysis of 5,10-methenyltetrahydrofolate to 10-formyltetrahydrofolate. The sequence is that of Bifunctional protein FolD 1/3 from Ruegeria pomeroyi (strain ATCC 700808 / DSM 15171 / DSS-3) (Silicibacter pomeroyi).